Here is a 185-residue protein sequence, read N- to C-terminus: Large ribosomal subunit protein uL18 (185 aa).

It belongs to the universal ribosomal protein uL18 family. In terms of assembly, part of the 50S ribosomal subunit. Contacts the 5S and 23S rRNAs.

Its function is as follows. This is one of the proteins that bind and probably mediate the attachment of the 5S RNA into the large ribosomal subunit, where it forms part of the central protuberance. This is Large ribosomal subunit protein uL18 from Halorubrum lacusprofundi (strain ATCC 49239 / DSM 5036 / JCM 8891 / ACAM 34).